We begin with the raw amino-acid sequence, 425 residues long: Enolase (425 aa).

Position 162 (glutamine 162) interacts with (2R)-2-phosphoglycerate. Glutamate 204 serves as the catalytic Proton donor. The Mg(2+) site is built by aspartate 241, glutamate 282, and aspartate 309. Residues lysine 334, arginine 363, serine 364, and lysine 385 each coordinate (2R)-2-phosphoglycerate. Lysine 334 acts as the Proton acceptor in catalysis.

The protein belongs to the enolase family. Requires Mg(2+) as cofactor.

It localises to the cytoplasm. It is found in the secreted. The protein resides in the cell surface. The enzyme catalyses (2R)-2-phosphoglycerate = phosphoenolpyruvate + H2O. The protein operates within carbohydrate degradation; glycolysis; pyruvate from D-glyceraldehyde 3-phosphate: step 4/5. Its function is as follows. Catalyzes the reversible conversion of 2-phosphoglycerate (2-PG) into phosphoenolpyruvate (PEP). It is essential for the degradation of carbohydrates via glycolysis. The chain is Enolase from Micrococcus luteus (strain ATCC 4698 / DSM 20030 / JCM 1464 / CCM 169 / CCUG 5858 / IAM 1056 / NBRC 3333 / NCIMB 9278 / NCTC 2665 / VKM Ac-2230) (Micrococcus lysodeikticus).